A 37-amino-acid chain; its full sequence is Large ribosomal subunit protein bL36 (37 aa).

Belongs to the bacterial ribosomal protein bL36 family.

The chain is Large ribosomal subunit protein bL36 from Synechococcus sp. (strain CC9311).